We begin with the raw amino-acid sequence, 194 residues long: Large ribosomal subunit protein bL25 (194 aa).

Belongs to the bacterial ribosomal protein bL25 family. CTC subfamily. In terms of assembly, part of the 50S ribosomal subunit; part of the 5S rRNA/L5/L18/L25 subcomplex. Contacts the 5S rRNA. Binds to the 5S rRNA independently of L5 and L18.

Functionally, this is one of the proteins that binds to the 5S RNA in the ribosome where it forms part of the central protuberance. The sequence is that of Large ribosomal subunit protein bL25 from Geobacter sulfurreducens (strain ATCC 51573 / DSM 12127 / PCA).